Consider the following 511-residue polypeptide: MEMDYDLVMEDEFDALCLDVRRHHDSTSKTKYPAKLHARKVVRELGVDDGLIYLPGQPEISLEDSDQPRLFRQRRYFFYITGANFEDCTATYEVKHDKLTLWIPYVEPRQVLWFGSKPSAAECKRRYDVDEVRYTTQLSGFLRSFAAQPSPPVTYILHPKQAPDLGHGSQSQLCLDSSLLLPAMDRARVVKSDYEVAMVRRANNISSAAHRRVAERILRLTNEREIEAIIQAVCIASGSRSQAYPIIAGSGANGATLHYGSNNASLGGKQCVVIDAGCEWNCYASDITRTLPLSGAWTPKAAAIHAIVQRMQDECIAKVGPGAAWREIHLHAASVGMEGLLGLGILKGRREDVARAGTVAAFFPHGLGHHVGLDVHDVSGTLALSAAEGRGQQLDFGKRAMVTPSMLADMTRVSSSQDAVGGGQSKTQLLLPNMIVTVEPGIYFCREYLEGYFRSDPAHADFIDWDLLEEYYDVGGVRIEDCILVTEDGYENLTVAPKGDELLDVINKGKK.

The Mn(2+) site is built by Asp-275, Asp-286, Glu-439, and Glu-480.

It belongs to the peptidase M24B family. Requires Mn(2+) as cofactor.

The enzyme catalyses Release of any N-terminal amino acid, including proline, that is linked to proline, even from a dipeptide or tripeptide.. Catalyzes the removal of a penultimate prolyl residue from the N-termini of peptides. This Metarhizium robertsii (strain ARSEF 23 / ATCC MYA-3075) (Metarhizium anisopliae (strain ARSEF 23)) protein is Probable Xaa-Pro aminopeptidase MAA_08947.